The chain runs to 86 residues: Small ribosomal subunit protein uS17 (86 aa).

It belongs to the universal ribosomal protein uS17 family. In terms of assembly, part of the 30S ribosomal subunit.

In terms of biological role, one of the primary rRNA binding proteins, it binds specifically to the 5'-end of 16S ribosomal RNA. This Caldicellulosiruptor saccharolyticus (strain ATCC 43494 / DSM 8903 / Tp8T 6331) protein is Small ribosomal subunit protein uS17.